A 429-amino-acid polypeptide reads, in one-letter code: S-adenosylmethionine synthase (429 aa).

H14 is an ATP binding site. Position 16 (D16) interacts with Mg(2+). E42 is a K(+) binding site. L-methionine-binding residues include E55 and Q98. The tract at residues 98 to 108 (QSADINRGVDR) is flexible loop. ATP contacts are provided by residues 165–167 (DAK), 252–253 (KF), D261, 267–268 (RK), A284, and K288. Position 261 (D261) interacts with L-methionine. L-methionine is bound at residue K292.

It belongs to the AdoMet synthase family. Homotetramer; dimer of dimers. It depends on Mg(2+) as a cofactor. K(+) is required as a cofactor.

It localises to the cytoplasm. The catalysed reaction is L-methionine + ATP + H2O = S-adenosyl-L-methionine + phosphate + diphosphate. Its pathway is amino-acid biosynthesis; S-adenosyl-L-methionine biosynthesis; S-adenosyl-L-methionine from L-methionine: step 1/1. Its function is as follows. Catalyzes the formation of S-adenosylmethionine (AdoMet) from methionine and ATP. The overall synthetic reaction is composed of two sequential steps, AdoMet formation and the subsequent tripolyphosphate hydrolysis which occurs prior to release of AdoMet from the enzyme. The polypeptide is S-adenosylmethionine synthase (Porphyromonas gingivalis (strain ATCC 33277 / DSM 20709 / CIP 103683 / JCM 12257 / NCTC 11834 / 2561)).